The primary structure comprises 423 residues: Gamma-glutamyl phosphate reductase (423 aa).

The protein belongs to the gamma-glutamyl phosphate reductase family.

The protein localises to the cytoplasm. The catalysed reaction is L-glutamate 5-semialdehyde + phosphate + NADP(+) = L-glutamyl 5-phosphate + NADPH + H(+). It functions in the pathway amino-acid biosynthesis; L-proline biosynthesis; L-glutamate 5-semialdehyde from L-glutamate: step 2/2. Its function is as follows. Catalyzes the NADPH-dependent reduction of L-glutamate 5-phosphate into L-glutamate 5-semialdehyde and phosphate. The product spontaneously undergoes cyclization to form 1-pyrroline-5-carboxylate. In Burkholderia ambifaria (strain ATCC BAA-244 / DSM 16087 / CCUG 44356 / LMG 19182 / AMMD) (Burkholderia cepacia (strain AMMD)), this protein is Gamma-glutamyl phosphate reductase.